Here is a 361-residue protein sequence, read N- to C-terminus: Phosphoserine aminotransferase (361 aa).

Arg-42 is an L-glutamate binding site. Pyridoxal 5'-phosphate contacts are provided by residues Ala-76–Arg-77, Trp-102, Thr-153, Asp-173, and Gln-196. Position 197 is an N6-(pyridoxal phosphate)lysine (Lys-197). Asn-238–Thr-239 provides a ligand contact to pyridoxal 5'-phosphate.

Belongs to the class-V pyridoxal-phosphate-dependent aminotransferase family. SerC subfamily. As to quaternary structure, homodimer. Pyridoxal 5'-phosphate is required as a cofactor.

It localises to the cytoplasm. The catalysed reaction is O-phospho-L-serine + 2-oxoglutarate = 3-phosphooxypyruvate + L-glutamate. It carries out the reaction 4-(phosphooxy)-L-threonine + 2-oxoglutarate = (R)-3-hydroxy-2-oxo-4-phosphooxybutanoate + L-glutamate. The protein operates within amino-acid biosynthesis; L-serine biosynthesis; L-serine from 3-phospho-D-glycerate: step 2/3. It functions in the pathway cofactor biosynthesis; pyridoxine 5'-phosphate biosynthesis; pyridoxine 5'-phosphate from D-erythrose 4-phosphate: step 3/5. Catalyzes the reversible conversion of 3-phosphohydroxypyruvate to phosphoserine and of 3-hydroxy-2-oxo-4-phosphonooxybutanoate to phosphohydroxythreonine. The polypeptide is Phosphoserine aminotransferase (Buchnera aphidicola subsp. Schizaphis graminum (strain Sg)).